A 391-amino-acid polypeptide reads, in one-letter code: tRNA-specific 2-thiouridylase MnmA (391 aa).

ATP-binding positions include 35–42 (GLSGGVDS) and Leu-61. Residue Cys-122 is the Nucleophile of the active site. An intrachain disulfide couples Cys-122 to Cys-221. Gly-147 provides a ligand contact to ATP. The segment at 171 to 173 (KDQ) is interaction with tRNA. Cys-221 acts as the Cysteine persulfide intermediate in catalysis. The interval 328–329 (RY) is interaction with tRNA.

It belongs to the MnmA/TRMU family.

It localises to the cytoplasm. It catalyses the reaction S-sulfanyl-L-cysteinyl-[protein] + uridine(34) in tRNA + AH2 + ATP = 2-thiouridine(34) in tRNA + L-cysteinyl-[protein] + A + AMP + diphosphate + H(+). In terms of biological role, catalyzes the 2-thiolation of uridine at the wobble position (U34) of tRNA, leading to the formation of s(2)U34. This chain is tRNA-specific 2-thiouridylase MnmA, found in Synechococcus sp. (strain CC9311).